The chain runs to 208 residues: F-box/kelch-repeat protein At2g43270 (208 aa).

One can recognise an F-box domain in the interval M1–R44. One copy of the Kelch repeat lies at R149–G200.

The polypeptide is F-box/kelch-repeat protein At2g43270 (Arabidopsis thaliana (Mouse-ear cress)).